The chain runs to 204 residues: Glycerol-3-phosphate acyltransferase (204 aa).

Helical transmembrane passes span 8–28, 53–73, 81–101, 116–136, and 155–175; these read ILIF…CYIF, VLAA…VVIA, FITA…IFFG, FGFS…VAII, and VIFT…IIIL.

It belongs to the PlsY family. In terms of assembly, probably interacts with PlsX.

It localises to the cell inner membrane. It catalyses the reaction an acyl phosphate + sn-glycerol 3-phosphate = a 1-acyl-sn-glycero-3-phosphate + phosphate. The protein operates within lipid metabolism; phospholipid metabolism. Catalyzes the transfer of an acyl group from acyl-phosphate (acyl-PO(4)) to glycerol-3-phosphate (G3P) to form lysophosphatidic acid (LPA). This enzyme utilizes acyl-phosphate as fatty acyl donor, but not acyl-CoA or acyl-ACP. The polypeptide is Glycerol-3-phosphate acyltransferase (Francisella tularensis subsp. holarctica (strain OSU18)).